A 1755-amino-acid chain; its full sequence is Deleted in lung and esophageal cancer protein 1 (1755 aa).

The segment covering 1–12 (METRSSKTRRSL) has biased composition (basic residues). Disordered stretches follow at residues 1 to 39 (METR…PSQP), 1339 to 1360 (PGPS…GSSS), and 1529 to 1553 (SQDG…EETA). Over residues 30–39 (PAGSSSPSQP) the composition is skewed to low complexity.

Interacts with alpha- and beta-tubulin. Interacts with BBS2, BBS4, BBS5, MKKS, TCP1, CCT2, CCT3, CCT4, CCT5 and CCT7. As to expression, expressed in all tissues examined. Expression is highest in prostate and testis.

It localises to the cytoplasm. Functionally, essential for spermatogenesis and male fertility. May play an important role in sperm head and tail formation. May act as a tumor suppressor by inhibiting cell proliferation. In Homo sapiens (Human), this protein is Deleted in lung and esophageal cancer protein 1.